Reading from the N-terminus, the 348-residue chain is Thioredoxin-related protein DsbJ (348 aa).

The signal sequence occupies residues 1-32; sequence MILLQNIKRCSLKQLKVLATLLLSLSLPTLEA.

It localises to the periplasm. This Chlamydia pneumoniae (Chlamydophila pneumoniae) protein is Thioredoxin-related protein DsbJ (dsbJ).